Consider the following 389-residue polypeptide: 11-beta-hydroxysteroid dehydrogenase-like 5 (389 aa).

Residues 11-31 (LVAPPATMVVMAFAWPLLSFI) form a helical; Signal-anchor for type II membrane protein membrane-spanning segment. NADP(+) is bound by residues 56–82 (GASSAIGEQIAYEYAKRGANLVLVARR) and aspartate 107. Serine 186 serves as a coordination point for substrate. The active-site Proton acceptor is the tyrosine 199. Residues 199–203 (YSAAK) and lysine 203 each bind NADP(+). The disordered stretch occupies residues 337 to 381 (LMLEGGPPRVPASPPRYTASPPHYTASPPRYPASPPRYPASPPRF). Residues 365 to 378 (PRYPASPPRYPASP) are compositionally biased toward pro residues.

It belongs to the short-chain dehydrogenases/reductases (SDR) family.

Its subcellular location is the membrane. This chain is 11-beta-hydroxysteroid dehydrogenase-like 5 (HSD5), found in Arabidopsis thaliana (Mouse-ear cress).